A 291-amino-acid polypeptide reads, in one-letter code: MLQGSLVALITPMNQDGSIHYDQLRQLIDWHIENGTDGIVAAGTTGESATLSVEEHLSVIEETVKHVAKRVPVIAGTGANNTVEAIALSQAAEKAGADYTLSVVPYYNKPSQEGMYRHFKAVAEAAAIPMILYNVPGRTVVSMNNETILRLAEIPNIVGVKEASGNVGSNIELINRAPEGFAVLSGDDHTALPFMLCGGHGVITVAANAAPKLFADMCRAALQGDIALARELNDRLIPIYDTMFCEPSPAAPKWAVSALGRCGPHVRLPLVPLTEGGQAKVRAALKASGQL.

T45 is a binding site for pyruvate. The active-site Proton donor/acceptor is the Y133. K161 functions as the Schiff-base intermediate with substrate in the catalytic mechanism. I203 is a binding site for pyruvate.

It belongs to the DapA family. As to quaternary structure, homotetramer; dimer of dimers.

The protein localises to the cytoplasm. The enzyme catalyses L-aspartate 4-semialdehyde + pyruvate = (2S,4S)-4-hydroxy-2,3,4,5-tetrahydrodipicolinate + H2O + H(+). It functions in the pathway amino-acid biosynthesis; L-lysine biosynthesis via DAP pathway; (S)-tetrahydrodipicolinate from L-aspartate: step 3/4. Its function is as follows. Catalyzes the condensation of (S)-aspartate-beta-semialdehyde [(S)-ASA] and pyruvate to 4-hydroxy-tetrahydrodipicolinate (HTPA). The protein is 4-hydroxy-tetrahydrodipicolinate synthase of Neisseria gonorrhoeae (strain ATCC 700825 / FA 1090).